The chain runs to 826 residues: U4/U6 snRNA-associated-splicing factor PRP24 (826 aa).

RRM domains lie at 310-385, 386-463, 477-554, and 598-670; these read TSVF…EAAG, ITLY…YSDP, REVH…LSVS, and RSFA…AVPQ.

Its subcellular location is the nucleus. Its function is as follows. Functions as a recycling factor of the spliceosome, a machinery that forms on each precursor-messenger RNA (pre-mRNA) and catalyzes the removal of introns. Chaperones the re-annealing of U4 and U6 snRNAs (small nuclear RNAs) released from previous rounds of splicing, an initial step in reforming the U4/U6-U5 tri-snRNP (small nuclear ribonucleoprotein) that can reassemble into another spliceosome complex; this step involves binding U6 and facilitating the unwinding of the U6 internal stem loop, followed by base-pairing of U6 to U4. The chain is U4/U6 snRNA-associated-splicing factor PRP24 from Ophiostoma ulmi (Dutch elm disease fungus).